The primary structure comprises 160 residues: DNA polymerase delta subunit 4 (160 aa).

The segment at 1-48 (MKKRTTQAKKSGQNTNIRDVFPHVVRSNSSQSHIGKKVSSEQSPTPDV) is disordered. A compositionally biased stretch (polar residues) spans 8 to 17 (AKKSGQNTNI).

It belongs to the DNA polymerase delta subunit 4 family. As to quaternary structure, heterotetramer that consist of the pol3, cdc1, cdc27 and cdm1 subunits. Interacts with cdc1 and pol3.

The protein resides in the nucleus. Its function is as follows. Appears to have a role in the stabilization of the DNA polymerase delta complex. This Schizosaccharomyces pombe (strain 972 / ATCC 24843) (Fission yeast) protein is DNA polymerase delta subunit 4 (cdm1).